The primary structure comprises 568 residues: Phosphoprotein (568 aa).

The tract at residues 1–24 is disordered; sequence MDQDAFFFERDPEAEGEAPRKQES. Positions 7 to 24 are enriched in basic and acidic residues; the sequence is FFERDPEAEGEAPRKQES. Residues 33–41 form an N0 binding region; the sequence is DVVLSYKPT. Residues 45-324 form a disordered region; sequence EDRSWLHGII…ANEEETSNTS (280 aa). Composition is skewed to basic and acidic residues over residues 56-105, 132-144, and 151-167; these read NPKE…HARI, RNTR…PNER, and LTDE…KREE. Residues 190 to 208 show a composition bias toward polar residues; sequence RTNNNGRSMETSSTHSTRI. Over residues 239–253 the composition is skewed to basic and acidic residues; the sequence is TRSERTQNSELHKST. Residues 294-305 are compositionally biased toward polar residues; sequence YTMNNANNNTKS. The multimerization stretch occupies residues 344–411; the sequence is FELSRSASHV…SSRDLHKRFS (68 aa). Residues 387–416 adopt a coiled-coil conformation; it reads EENRTLLKQIQEEINSSRDLHKRFSEYQKE. The segment at 412–445 is l protein binding; that stretch reads EYQKEQNSLMMANLSTLHIITDRGGKTGDPSDTT. Positions 434 to 455 are disordered; the sequence is RGGKTGDPSDTTRSPSVFTKGK. A compositionally biased stretch (polar residues) spans 441 to 450; the sequence is PSDTTRSPSV. The interval 479–568 is interaction with the nucleocapsid (N-RNA); it reads DLIREDELRD…FEEDIDSLTN (90 aa).

The protein belongs to the respirovirus P protein family. As to quaternary structure, homotetramer. Interacts (via multimerization domain) with polymerase L; this interaction forms the polymerase complex. Interacts (via N-terminus) with N0; this interaction allows P to chaperon N0 before encapsidation and form the N-P complex. Interacts (via C-terminus) with N-RNA template; this interaction positions the polymerase on the template.

Essential cofactor of the RNA polymerase L that plays a central role in the transcription and replication by forming the polymerase complex with RNA polymerase L and recruiting L to the genomic N-RNA template for RNA synthesis. Also plays a central role in the encapsidation of nascent RNA chains by forming the encapsidation complex with the nucleocapsid protein N (N-P complex). Acts as a chaperone for newly synthesized free N protein, so-called N0, allowing encapsidation of nascent RNA chains during replication. The nucleoprotein protein N prevents excessive phosphorylation of P, which leads to down-regulation of viral transcription/ replication. Participates, together with N, in the formation of viral factories (viroplasms), which are large inclusions in the host cytoplasm where replication takes place. Recruits host PI4KB and remodel the host endoplasmic reticulum membrane to form viral replication factories. This chain is Phosphoprotein (P/C), found in Human parainfluenza 1 virus (strain C35) (HPIV-1).